The sequence spans 178 residues: MESPVELLAALPALVTALALLLAWLLLRRGAARVPAPESTASDEAPGAPAPPEPPESCAPEPAPEGPSQSERVAEPEESEAEEPAAEGRQDEDSDSEMGPPTEEPEEEDGAAFSFKYSPGQLRGSQYKKMMTKEELEEEHRVQKEQLAAIFKLMKDNKDTFGEMSDGDMQEQLRLYDM.

A helical membrane pass occupies residues 7–27 (LLAALPALVTALALLLAWLLL). Positions 33-121 (RVPAPESTAS…AFSFKYSPGQ (89 aa)) are disordered. Positions 48 to 65 (APAPPEPPESCAPEPAPE) are enriched in pro residues. The segment covering 76–85 (PEESEAEEPA) has biased composition (acidic residues). S79 and S165 each carry phosphoserine.

It is found in the membrane. In Mus musculus (Mouse), this protein is Matrix-remodeling-associated protein 7 (Mxra7).